The following is a 348-amino-acid chain: Probable WRKY transcription factor 27 (348 aa).

Disordered stretches follow at residues 19 to 52 (VSTT…ASSS), 67 to 90 (TTTT…SPSP), 133 to 153 (LLQQ…QQKR), and 218 to 320 (GEHT…LIPN). The span at 75–85 (SPPPLLPPPKA) shows a compositional bias: pro residues. Over residues 133–142 (LLQQQSQPPL) the composition is skewed to low complexity. Residues 143 to 153 (RSRKRKNQQKR) show a composition bias toward basic residues. Positions 159–225 (TQENLSSDLW…YTGEHTHPRP (67 aa)) form a DNA-binding region, WRKY. Over residues 228–242 (RNSLAGSTRNKSQPV) the composition is skewed to polar residues. The span at 274–315 (DVQETNGDEDMVGQEVNMEEEEEEEEVEEDDEEEEDDDDVDD) shows a compositional bias: acidic residues.

The protein belongs to the WRKY group II-e family.

It is found in the nucleus. Transcription factor. Interacts specifically with the W box (5'-(T)TGAC[CT]-3'), a frequently occurring elicitor-responsive cis-acting element. The chain is Probable WRKY transcription factor 27 (WRKY27) from Arabidopsis thaliana (Mouse-ear cress).